A 356-amino-acid chain; its full sequence is tRNA N6-adenosine threonylcarbamoyltransferase (356 aa).

Fe cation-binding residues include H115 and H119. Residues 137 to 141 (LVSGG), D170, G183, and N280 contribute to the substrate site. D308 contacts Fe cation.

Belongs to the KAE1 / TsaD family. The cofactor is Fe(2+).

Its subcellular location is the cytoplasm. The catalysed reaction is L-threonylcarbamoyladenylate + adenosine(37) in tRNA = N(6)-L-threonylcarbamoyladenosine(37) in tRNA + AMP + H(+). Its function is as follows. Required for the formation of a threonylcarbamoyl group on adenosine at position 37 (t(6)A37) in tRNAs that read codons beginning with adenine. Is involved in the transfer of the threonylcarbamoyl moiety of threonylcarbamoyl-AMP (TC-AMP) to the N6 group of A37, together with TsaE and TsaB. TsaD likely plays a direct catalytic role in this reaction. This Paracoccus denitrificans (strain Pd 1222) protein is tRNA N6-adenosine threonylcarbamoyltransferase.